We begin with the raw amino-acid sequence, 565 residues long: NAD-dependent malic enzyme (565 aa).

The active-site Proton donor is the Tyr-104. An NAD(+)-binding site is contributed by Arg-157. Lys-175 acts as the Proton acceptor in catalysis. The a divalent metal cation site is built by Glu-246, Asp-247, and Asp-270. Positions 270 and 418 each coordinate NAD(+).

Belongs to the malic enzymes family. In terms of assembly, homotetramer. It depends on Mg(2+) as a cofactor. The cofactor is Mn(2+).

It carries out the reaction (S)-malate + NAD(+) = pyruvate + CO2 + NADH. It catalyses the reaction oxaloacetate + H(+) = pyruvate + CO2. The chain is NAD-dependent malic enzyme from Salmonella newport (strain SL254).